The sequence spans 379 residues: Presenilin-associated rhomboid-like protein, mitochondrial (379 aa).

The transit peptide at 1–52 (MAWRGWAQRGWGCGQAWGASVGGRSCEELTAVLTPPQLLGRRFNFFIQQKCG) directs the protein to the mitochondrion. The Mitochondrial matrix segment spans residues 53 to 101 (FRKAPRKVEPRRSDPGTSGEAYKRSALIPPVEETVFYPSPYPIRSLIKP). The residue at position 65 (Ser65) is a Phosphoserine. Position 69 is a phosphothreonine (Thr69). Ser70 carries the post-translational modification Phosphoserine. A helical transmembrane segment spans residues 102 to 121 (LFFTVGFTGCAFGSAAIWQY). The Mitochondrial intermembrane segment spans residues 122 to 167 (ESLKSRVQSYFDGIKADWLDSIRPQKEGDFRKEINKWWNNLSDGQR). Residues 168–187 (TVTGIIAANVLVFCLWRVPS) traverse the membrane as a helical segment. At 188–207 (LQRTMIRYFTSNPASKVLCS) the chain is on the mitochondrial matrix side. Residues 208–230 (PMLLSTFSHFSLFHMAANMYVLW) traverse the membrane as a helical segment. At 231–244 (SFSSSIVNILGQEQ) the chain is on the mitochondrial intermembrane side. A helical membrane pass occupies residues 245-262 (FMAVYLSAGVISNFVSYV). The Mitochondrial matrix portion of the chain corresponds to 263-272 (GKVATGRYGP). The helical transmembrane segment at 273–289 (SLGASGAIMTVLAAVCT) threads the bilayer. The active-site Nucleophile is the Ser277. The Mitochondrial intermembrane segment spans residues 290–295 (KIPEGR). The chain crosses the membrane as a helical span at residues 296–318 (LAIIFLPMFTFTAGNALKAIIAM). Residues 319 to 332 (DTAGMILGWKFFDH) lie on the Mitochondrial matrix side of the membrane. A helical membrane pass occupies residues 333–354 (AAHLGGALFGIWYVTYGHELIW). His335 is an active-site residue. Topologically, residues 355–379 (KNREPLVKIWHEIRTNGPKKGGGSK) are mitochondrial intermembrane.

It belongs to the peptidase S54 family. In terms of assembly, interacts with PSEN1 and PSEN2. Binds OPA1. Post-translationally, P-beta is proteolytically processed (beta-cleavage) in a PARL-dependent manner. The cleavage is inhibited when residues Ser-65, Thr-69 and Ser-70 are all phosphorylated.

It localises to the mitochondrion inner membrane. Its subcellular location is the nucleus. The catalysed reaction is Cleaves type-1 transmembrane domains using a catalytic dyad composed of serine and histidine that are contributed by different transmembrane domains.. Functionally, required for the control of apoptosis during postnatal growth. Essential for proteolytic processing of an antiapoptotic form of OPA1 which prevents the release of mitochondrial cytochrome c in response to intrinsic apoptotic signals. Required for the maturation of PINK1 into its 52kDa mature form after its cleavage by mitochondrial-processing peptidase (MPP). Promotes cleavage of serine/threonine-protein phosphatase PGAM5 in damaged mitochondria in response to loss of mitochondrial membrane potential. Mediates differential cleavage of PINK1 and PGAM5 depending on the health status of mitochondria, disassociating from PINK1 and associating with PGAM5 in response to mitochondrial membrane potential loss. Required for processing of CLPB into a form with higher protein disaggregase activity by removing an autoinhibitory N-terminal peptide. Promotes processing of DIABLO/SMAC in the mitochondrion which is required for DIABLO apoptotic activity. Also required for cleavage of STARD7 and TTC19. Promotes changes in mitochondria morphology regulated by phosphorylation of P-beta domain. This is Presenilin-associated rhomboid-like protein, mitochondrial (PARL) from Homo sapiens (Human).